We begin with the raw amino-acid sequence, 183 residues long: Oligoribonuclease (183 aa).

One can recognise an Exonuclease domain in the interval 8–171 (LIWLDLEMTG…QDIRDSIEEL (164 aa)). Tyrosine 129 is an active-site residue.

This sequence belongs to the oligoribonuclease family.

Its subcellular location is the cytoplasm. 3'-to-5' exoribonuclease specific for small oligoribonucleotides. This is Oligoribonuclease from Coxiella burnetii (strain RSA 493 / Nine Mile phase I).